Here is a 375-residue protein sequence, read N- to C-terminus: Leucoanthocyanidin dioxygenase 1 (375 aa).

A Fe2OG dioxygenase domain is found at 218–317; that stretch reads LLLQLKINYY…RLSWVVFCEP (100 aa). Positions 242, 244, and 298 each coordinate Fe cation. 2-oxoglutarate is bound at residue Arg308.

This sequence belongs to the iron/ascorbate-dependent oxidoreductase family. Requires L-ascorbate as cofactor. The cofactor is Fe(2+).

The catalysed reaction is a (2R,3S,4S)-leucoanthocyanidin + 2-oxoglutarate + O2 = a 4-H-anthocyanidin with a 3-hydroxy group + succinate + CO2 + 2 H2O. Its pathway is pigment biosynthesis; anthocyanin biosynthesis. Involved in anthocyanin and protoanthocyanidin biosynthesis by catalyzing the oxidation of leucoanthocyanidins into anthocyanidins. Is able to synthesize anthocyanin pigments from leucoanthocyanidins in aleurone tissue. Converts dihydroquercetin to quercetin in vitro. This chain is Leucoanthocyanidin dioxygenase 1, found in Oryza sativa subsp. indica (Rice).